The primary structure comprises 217 residues: LLEGFLVGGGVPGPGTACLTKALKDSGDLLVELAVIICAYQNGKDLQEQDFKELKELLERTLERAGCALDDIVADLGLEELLGSIGVSTGDIIQGLYKLLKELKIDETVFNAVCDVTKKMLDNKCLPKILQGDLVKFLKDLKYKVCIEGGDPELIIKDLKIILERLPCVLGGVGLDDLFKNIFVKDGILSFEGIAKPLGDLLILVLCPNVKNINVSS.

4 disulfides stabilise this stretch: Cys-18-Cys-67, Cys-38-Cys-114, Cys-125-Cys-168, and Cys-146-Cys-207.

In terms of assembly, monomer. As to expression, exclusively expressed in females in the early oviduct, the glandular part of the oviduct (pars convoluta dilata) and in the cloaca.

The protein localises to the secreted. Functionally, acts as a surfactant. Is the major protein constituent (45%) of foam nests. Has no antimicrobial activity, no larvicidal activity, and is not toxic to mice. The protein is Ranaspumin of Leptodactylus vastus (Northeastern pepper frog).